The sequence spans 236 residues: uncharacterized protein (236 aa).

This is an uncharacterized protein from Ureaplasma parvum serovar 3 (strain ATCC 700970).